Consider the following 257-residue polypeptide: Large ribosomal subunit protein uL2 (257 aa).

The disordered stretch occupies residues 210-231; sequence PHGGGNHQHIGKASTVKRGTSA.

It belongs to the universal ribosomal protein uL2 family.

Its subcellular location is the cytoplasm. The polypeptide is Large ribosomal subunit protein uL2 (RpL8) (Mamestra brassicae (Cabbage moth)).